A 951-amino-acid polypeptide reads, in one-letter code: MRGRGNARSSQALGVSWCPATWHPRLDMGRLHRPRSSTSYRNLPHLFLFFLFVGPFSCLGSYSRATELLYSLNEGLPAGVLIGSLAEDLRLLPRSAGRPDPQSQLPERTGAEWNPPLSFSLASRGLSGQYVTLDNRSGELHTSAQEIDREALCVEGGGGTAWSGSVSISSSPSDSCLLLLDVLVLPQEYFRFVKVKIAIRDINDNAPQFPVSQISVWVPENAPVNTRLAIEHPAVDPDVGINGVQTYRLLDYHGMFTLDVEENENGERTPYLIVMGALDRETQDQYVSIIIAEDGGSPPLLGSATLTIGISDINDNCPLFTDSQINVTVYGNATVGTPIAAVQAVDKDLGTNAQITYSYSQKVPQASKDLFHLDENTGVIKLFSKIGGSVLESHKLTILANGPGCIPAVITALVSIIKVIFRPPEIVPRYIANEIDGVVYLKELEPVNTPIAFFTIRDPEGKYKVNCYLDGEGPFRLSPYKPYNNEYLLETTKPMDYELQQFYEVAVVAWNSEGFHVKRVIKVQLLDDNDNAPIFLQPLIELTIEENNSPNAFLTKLYATDADSEERGQVSYFLGPDAPSYFSLDSVTGILTVSTQLDREEKEKYRYTVRAVDCGKPPRESVATVALTVLDKNDNSPRFINKDFSFFVPENFPGYGEIGVISVTDADAGRNGWVALSVVNQSDIFVIDTGKGMLRAKVSLDREQQSSYTLWVEAVDGGEPALSSTAKITILLLDINDNPPLVLFPQSNMSYLLVLPSTLPGSPVTEVYAVDKDTGMNAVIAYSIIGRRGPRPESFRIDPKTGNITLEEALLQTDYGLHRLLVKVSDHGYPEPLHSTVMVNLFVNDTVSNESYIESLLRKEPEINIEEKEPQISIEPTHRKVESVSCMPTLVALSVISLGSITLVTGMGIYICLRKGEKHPREDENLEVQIPLKGKIDLHMRERKPMDISNI.

Positions 1–60 (MRGRGNARSSQALGVSWCPATWHPRLDMGRLHRPRSSTSYRNLPHLFLFFLFVGPFSCLG) are cleaved as a signal peptide. The Extracellular portion of the chain corresponds to 61 to 890 (SYSRATELLY…VESVSCMPTL (830 aa)). Cadherin domains follow at residues 64-209 (RATE…APQF), 210-320 (PVSQ…CPLF), 321-535 (TDSQ…APIF), 536-639 (LQPL…SPRF), 640-742 (INKD…PPLV), and 746-863 (QSNM…EPEI). N135 carries N-linked (GlcNAc...) asparagine glycosylation. Residues N326 and N332 are each glycosylated (N-linked (GlcNAc...) asparagine). 5 N-linked (GlcNAc...) asparagine glycosylation sites follow: N680, N748, N803, N844, and N849. Residues 891–911 (VALSVISLGSITLVTGMGIYI) form a helical membrane-spanning segment. Residues 912–951 (CLRKGEKHPREDENLEVQIPLKGKIDLHMRERKPMDISNI) lie on the Cytoplasmic side of the membrane.

The protein localises to the cell membrane. In terms of biological role, potential calcium-dependent cell-adhesion protein. In Homo sapiens (Human), this protein is Protocadherin-20 (PCDH20).